The sequence spans 579 residues: Glypican-3 (579 aa).

Positions 1–24 (MAGTVRTACLLVAMLLGLGCLGQA) are cleaved as a signal peptide. Gln-25 bears the Pyrrolidone carboxylic acid mark. 7 disulfides stabilise this stretch: Cys-34/Cys-71, Cys-64/Cys-261, Cys-72/Cys-264, Cys-196/Cys-348, Cys-251/Cys-284, Cys-273/Cys-421, and Cys-277/Cys-409. 2 N-linked (GlcNAc...) asparagine glycosylation sites follow: Asn-123 and Asn-240. Position 351 is a phosphoserine (Ser-351). Asn-417 carries an N-linked (GlcNAc...) asparagine glycan. 2 O-linked (Xyl...) (glycosaminoglycan) serine glycosylation sites follow: Ser-494 and Ser-508. Residues 533-552 (DAPGNKQHGNQKDNEITTSH) are disordered. A lipid anchor (GPI-anchor amidated serine) is attached at Ser-553. The propeptide at 554–579 (VGNMPSPLKILISVAIYVACFFFLVH) is removed in mature form.

This sequence belongs to the glypican family. As to quaternary structure, heterodimer; disulfide-linked. Cleavage by a furin-like convertase results in production of alpha and beta chains which form a disulfide-linked heterodimer. Interacts with DPP4. Interacts with FGF2. Interacts with WNT5A. Also interacts with WNT3A and WNT7B. Interacts with hedgehog protein SHH; the heparan sulfate chains are not required for the interaction. Also interacts with hedgehog protein IHH. Interacts with CD81. Interacts with Wnt receptors FZD4, FZD7 and FZD8; the heparan sulfate chains are required for the interaction. O-glycosylated; contains heparan sulfate and/or chondroitin sulfate. In terms of processing, cleaved intracellularly by a furin-like convertase to generate 2 subunits, alpha and beta, which remain associated through disulfide bonds and are associated with the cell surface via the GPI-anchor. This processing is essential for its role in inhibition of hedgehog signaling. A second proteolytic event may result in cleavage of the protein on the cell surface, separating it from the GPI-anchor and leading to its shedding from the cell surface. In the developing limb, absent from the apical epidermal ridge at 11 dpc but highly expressed in the underlying mesenchyme. Expression in the mesenchyme at this stage is asymmetric with highest levels in the regions of the distal mesenchyme within the progress zone and within the proximal anterior and posterior limb bud. At later developmental stages including 12.5 and 13.5 dpc, expression is restricted to the interdigital webs and the regions of chondrocytic differentiation of the developing bones. In the embryonic kidney, expressed in both the ureteric bud and mesenchymal cells as early as 13.5 dpc. Expression at 16.5 dpc is similar to that at 13.5 dpc but decreases by 18.5 dpc.

It localises to the cell membrane. In terms of biological role, cell surface proteoglycan. Negatively regulates the hedgehog signaling pathway when attached via the GPI-anchor to the cell surface by competing with the hedgehog receptor PTC1 for binding to hedgehog proteins. Binding to the hedgehog protein SHH triggers internalization of the complex by endocytosis and its subsequent lysosomal degradation. Positively regulates the canonical Wnt signaling pathway by binding to the Wnt receptor Frizzled and stimulating the binding of the Frizzled receptor to Wnt ligands. Positively regulates the non-canonical Wnt signaling pathway. Binds to CD81 which decreases the availability of free CD81 for binding to the transcriptional repressor HHEX, resulting in nuclear translocation of HHEX and transcriptional repression. Inhibits the dipeptidyl peptidase activity of DPP4. Plays a role in limb patterning and skeletal development by controlling the cellular response to BMP4. Modulates the effects of growth factors BMP2, BMP7 and FGF7 on renal branching morphogenesis. Required for coronary vascular development. Plays a role in regulating cell movements during gastrulation. This is Glypican-3 (Gpc3) from Mus musculus (Mouse).